We begin with the raw amino-acid sequence, 1023 residues long: FHIP family protein AGAP011705 (1023 aa).

Composition is skewed to polar residues over residues 1–13 (MSWLRSSPLRQSF), 806–825 (SMTSSLSQTTPMQLTPSSSY), and 868–888 (GLNHSPNGRQQPQSYTPASMN). Disordered regions lie at residues 1–39 (MSWLRSSPLRQSFSKSGNNSNSNGGGSANDRSRSGAGGG) and 797–927 (GKLL…AETQ). Residues 889–906 (VPSPVGQQQHQHQSVSSV) show a composition bias toward low complexity.

This sequence belongs to the FHIP family.

In Anopheles gambiae (African malaria mosquito), this protein is FHIP family protein AGAP011705.